The sequence spans 255 residues: Protein YIPF7 (255 aa).

The Cytoplasmic portion of the chain corresponds to 1–124; sequence MSNLGQFDSD…ADGSIMNETD (124 aa). Residues 125–145 traverse the membrane as a helical segment; sequence LTGPILFCMALGATLLLAGKV. Q146 is a topological domain (lumenal). Residues 147 to 167 form a helical membrane-spanning segment; it reads FGYVYGMSAIGCLGIHALLNL. At 168 to 180 the chain is on the cytoplasmic side; that stretch reads MSSSGVSYGCVAS. The chain crosses the membrane as a helical span at residues 181-201; the sequence is VLGYCLLPMVILSSCAIFFSL. Topologically, residues 202-204 are lumenal; the sequence is QGT. Residues 205-225 traverse the membrane as a helical segment; the sequence is FGTVSALVIIGWCSLSASKIF. At 226 to 234 the chain is on the cytoplasmic side; the sequence is TSALAMEGQ. A helical membrane pass occupies residues 235–255; the sequence is QLLIAYPCALLYGLFALVTVF.

It belongs to the YIP1 family.

It is found in the endoplasmic reticulum membrane. It localises to the golgi apparatus. The protein resides in the cis-Golgi network membrane. Its subcellular location is the trans-Golgi network membrane. This is Protein YIPF7 (YIPF7) from Bos taurus (Bovine).